Here is a 314-residue protein sequence, read N- to C-terminus: Fibrinogen-like protein 1 (314 aa).

Residues 1–22 (MGEIRSFLLVTIALMMGREIWA) form the signal peptide. Positions 25-59 (NSKCLLEQERLRAQVQQLETRVKQQQARIAQLMHE) form a coiled coil. The Fibrinogen C-terminal domain maps to 76 to 308 (LGGKRQYADC…SVVMKIRPND (233 aa)). Cystine bridges form between Cys-85–Cys-114 and Cys-250–Cys-263.

In terms of assembly, homodimer. Interacts (via the Fibrinogen C-terminal domain) with LAG3 (via Ig-like domains 1 and 2).

It is found in the secreted. Functionally, immune suppressive molecule that inhibits antigen-specific T-cell activation by acting as a major ligand of LAG3. Responsible for LAG3 T-cell inhibitory function. Binds LAG3 independently from MHC class II (MHC-II). Secreted by, and promotes growth of, hepatocytes. The sequence is that of Fibrinogen-like protein 1 from Mesocricetus auratus (Golden hamster).